A 415-amino-acid polypeptide reads, in one-letter code: Exodeoxyribonuclease 7 large subunit (415 aa).

It belongs to the XseA family. Heterooligomer composed of large and small subunits.

It localises to the cytoplasm. The catalysed reaction is Exonucleolytic cleavage in either 5'- to 3'- or 3'- to 5'-direction to yield nucleoside 5'-phosphates.. Bidirectionally degrades single-stranded DNA into large acid-insoluble oligonucleotides, which are then degraded further into small acid-soluble oligonucleotides. The chain is Exodeoxyribonuclease 7 large subunit from Mycobacterium bovis (strain ATCC BAA-935 / AF2122/97).